The following is a 411-amino-acid chain: Tyrosine--tRNA ligase (411 aa).

Tyrosine 34 lines the L-tyrosine pocket. Positions 39 to 48 match the 'HIGH' region motif; that stretch reads CTATSLHIGS. L-tyrosine is bound by residues tyrosine 171 and glutamine 175. Residues 231 to 235 carry the 'KMSKS' region motif; the sequence is KMGKT. Lysine 234 contacts ATP. The S4 RNA-binding domain occupies 345–411; sequence ISAYELFHEA…GKKRHILVRV (67 aa).

The protein belongs to the class-I aminoacyl-tRNA synthetase family. TyrS type 1 subfamily. As to quaternary structure, homodimer.

The protein localises to the cytoplasm. It catalyses the reaction tRNA(Tyr) + L-tyrosine + ATP = L-tyrosyl-tRNA(Tyr) + AMP + diphosphate + H(+). Functionally, catalyzes the attachment of tyrosine to tRNA(Tyr) in a two-step reaction: tyrosine is first activated by ATP to form Tyr-AMP and then transferred to the acceptor end of tRNA(Tyr). In Rickettsia peacockii (strain Rustic), this protein is Tyrosine--tRNA ligase.